The following is a 1515-amino-acid chain: DNA topoisomerase 2-binding protein 1 (1515 aa).

BRCT domains lie at 101 to 189 (VYNM…KYTD) and 195 to 284 (FKCP…IYKA). Position 298 is a phosphothreonine (Thr298). 3 consecutive BRCT domains span residues 353-443 (APED…SYIH), 551-636 (REEG…SNPL), and 644-741 (SGVT…HFLV). The tract at residues 759-893 (VSSNPDLPAH…TDSHSASPQL (135 aa)) is interaction with CIP2A. Thr782 is modified (phosphothreonine). The disordered stretch occupies residues 799 to 826 (SQQRGQDPTFPPVRQPLTKEPSLHLDTP). Position 851 is a phosphothreonine (Thr851). Phosphoserine is present on residues Ser862, Ser863, Ser866, Ser888, and Ser890. The span at 880-891 (SSRNTDSHSASP) shows a compositional bias: polar residues. The disordered stretch occupies residues 880-901 (SSRNTDSHSASPQLKGAHLEEE). The region spanning 902–993 (ETRKPLDSVV…KHLPESLYPH (92 aa)) is the BRCT 6 domain. The segment at 1020–1055 (VSASKDDGPDHLSVEGNETNTMGTNDKESPLLNGSG) is disordered. A compositionally biased stretch (basic and acidic residues) spans 1023–1032 (SKDDGPDHLS). Thr1064 is subject to Phosphothreonine. Residues 1097–1116 (SRSSCNSASSTPDSARSVRS) show a composition bias toward low complexity. Disordered regions lie at residues 1097 to 1119 (SRSS…SGRS), 1203 to 1255 (VTQA…TQEE), and 1491 to 1515 (KKGG…PRVH). Residues 1217–1229 (PPVAERPLIPEPQ) show a composition bias toward pro residues. Residues 1255–1347 (ETHRKVKKQY…RFVQEEDYEW (93 aa)) enclose the BRCT 7 domain. The Nuclear localization signal signature appears at 1510-1513 (KRPR).

The protein belongs to the TOPBP1 family. In terms of assembly, interacts (via BRCT domains 1 and 2) with (phosphorylated) MDC1; promoting TOPBP1 recruitment to DNA damage sites during mitosis. Interacts (via BRCT domains 7 and 8) with (autophosphorylated) ATR; promoting activation of ATR. Interacts (via BRCT domains 7 and 8) with (phosphorylated) POLQ; specifically binds POLQ phosphorylated by PLK1, promoting POLQ recruitment to DNA damage sites. Interacts (via BRCT domains 1 and 2) with (phosphorylated) RAD9A. Interacts (via BRCT domain 2) with (phosphorylated) TP53BP1. Interacts (via BRCT domain 2) with (phosphorylated) HTATSF1. Interacts (via BRCT domains 7 and 8) with (phosphorylated) RAD51; promoting RAD51 recruitment to damaged chromatin. Interacts with CIP2A; forming the CIP2A-TOPBP1 complex. Interacts with POLE. Interacts with UBR5. Interacts with E2F1. Interacts with PML. Interacts with SMARCA2. Interacts with SMARCA4. Interacts with RHNO1. May interact with TOP2B. Interacts with TICRR. Interacts with HELB. In terms of processing, phosphorylated on serine and threonine residues in response to X-ray irradiation. Ubiquitinated and degraded by the proteasome. X-ray irradiation reduces ubiquitination. Deubiquitinated by USP13; leading to TOPBP1 stabilizion and activation of the ATR-TOPBP1 axis pathway. In terms of tissue distribution, highly expressed in testis.

Its subcellular location is the nucleus. It is found in the chromosome. The protein localises to the cytoplasm. The protein resides in the cytoskeleton. It localises to the microtubule organizing center. Its subcellular location is the centrosome. It is found in the spindle pole. In terms of biological role, scaffold protein that acts as a key protein-protein adapter in DNA replication and DNA repair. Composed of multiple BRCT domains, which specifically recognize and bind phosphorylated proteins, bringing proteins together into functional combinations. Required for DNA replication initiation but not for the formation of pre-replicative complexes or the elongation stages. Necessary for the loading of replication factors onto chromatin, including GMNC, CDC45, DNA polymerases and components of the GINS complex. Plays a central role in DNA repair by bridging proteins and promoting recruitment of proteins to DNA damage sites. Involved in double-strand break (DSB) repair via homologous recombination in S-phase by promoting the exchange between the DNA replication factor A (RPA) complex and RAD51. Mechanistically, TOPBP1 is recruited to DNA damage sites in S-phase via interaction with phosphorylated HTATSF1, and promotes the loading of RAD51, thereby facilitating RAD51 nucleofilaments formation and RPA displacement, followed by homologous recombination. Involved in microhomology-mediated end-joining (MMEJ) DNA repair by promoting recruitment of polymerase theta (POLQ) to DNA damage sites during mitosis. MMEJ is an alternative non-homologous end-joining (NHEJ) machinery that takes place during mitosis to repair DSBs in DNA that originate in S-phase. Recognizes and binds POLQ phosphorylated by PLK1, enabling its recruitment to DSBs for subsequent repair. Involved in G1 DNA damage checkpoint by acting as a molecular adapter that couples TP53BP1 and the 9-1-1 complex. In response to DNA damage, triggers the recruitment of checkpoint signaling proteins on chromatin, which activate the CHEK1 signaling pathway and block S-phase progression. Acts as an activator of the kinase activity of ATR. Also required for chromosomal stability when DSBs occur during mitosis by forming filamentous assemblies that bridge MDC1 and tether broken chromosomes during mitosis. Together with CIP2A, plays an essential role in the response to genome instability generated by the presence of acentric chromosome fragments derived from shattered chromosomes within micronuclei. Micronuclei, which are frequently found in cancer cells, consist of chromatin surrounded by their own nuclear membrane: following breakdown of the micronuclear envelope, a process associated with chromothripsis, the CIP2A-TOPBP1 complex tethers chromosome fragments during mitosis to ensure clustered segregation of the fragments to a single daughter cell nucleus, facilitating re-ligation with limited chromosome scattering and loss. Recruits the SWI/SNF chromatin remodeling complex to E2F1-responsive promoters, thereby down-regulating E2F1 activity and inhibiting E2F1-dependent apoptosis during G1/S transition and after DNA damage. The polypeptide is DNA topoisomerase 2-binding protein 1 (Mus musculus (Mouse)).